The sequence spans 205 residues: Ribosome maturation factor RimP (205 aa).

The segment covering 1–13 (MSNAEATTSSDRT) has biased composition (polar residues). The interval 1–27 (MSNAEATTSSDRTGTGKAEAESVHNPE) is disordered. Basic and acidic residues predominate over residues 18–27 (AEAESVHNPE).

Belongs to the RimP family.

The protein resides in the cytoplasm. Functionally, required for maturation of 30S ribosomal subunits. This is Ribosome maturation factor RimP from Arthrobacter sp. (strain FB24).